The following is a 232-amino-acid chain: Aprataxin-like protein (232 aa).

Residues leucine 38–leucine 160 enclose the HIT domain. 3 interaction with DNA regions span residues aspartate 63–lysine 67, histidine 138–histidine 149, and lysine 161–histidine 165. The active-site Nucleophile is the histidine 147. Residues cysteine 200 and cysteine 203 each contribute to the Zn(2+) site. The segment at arginine 209–threonine 212 is interaction with DNA. 2 residues coordinate Zn(2+): histidine 217 and glutamate 221.

Monomer.

The protein resides in the nucleus. The protein localises to the cytoplasm. The enzyme catalyses a 5'-end adenosine-5'-diphospho-5'-2'-deoxyribonucleoside-DNA + H2O = a 5'-end 5'-phospho-2'-deoxyribonucleoside-DNA + AMP + 2 H(+). The catalysed reaction is a 5'-end adenosine-5'-diphospho-5'-ribonucleoside-2'-deoxyribonucleotide-DNA + H2O = a 5'-end 5'-phospho-ribonucleoside-2'-deoxyribonucleotide-DNA + AMP + 2 H(+). It carries out the reaction a 3'-end 2'-deoxyribonucleotide-3'-diphospho-5'-guanosine-DNA + H2O = a 3'-end 2'-deoxyribonucleotide 3'-phosphate-DNA + GMP + 2 H(+). DNA-binding protein involved in single-strand DNA break repair, double-strand DNA break repair and base excision repair. Resolves abortive DNA ligation intermediates formed either at base excision sites, or when DNA ligases attempt to repair non-ligatable breaks induced by reactive oxygen species. Catalyzes the release of adenylate groups covalently linked to 5'-phosphate termini, resulting in the production of 5'-phosphate termini that can be efficiently rejoined. Likewise, catalyzes the release of 3'-linked guanosine (DNAppG) and inosine (DNAppI) from DNA, but has higher specific activity with 5'-linked adenosine (AppDNA). The protein is Aprataxin-like protein (hnt3) of Schizosaccharomyces pombe (strain 972 / ATCC 24843) (Fission yeast).